The following is a 253-amino-acid chain: MFRLFHNQQKAKTKLKVLLIFQLSVIFSLTAAICLQFSDDTSAAFHDIETFDVSLQTCKDFQHTDKNCHYDKRWDQSDLHISDQTDTKGTVCSPFALFAVLENTGEKLKKSKWKWELHKLENARKPLKDGNVIEKGFVSNQIGDSLYKIETKKKMKPGIYAFKVYKPAGYPANGSTFEWSEPMRLAKCDEKPTVPKKETKSDVKKENETTQKDIPEKTMKEETSQEAVTKEKETQSDQKESGEEDEKSNEADQ.

The signal sequence occupies residues 1-32 (MFRLFHNQQKAKTKLKVLLIFQLSVIFSLTAA). An important for TasA fiber formation region spans residues 50–57 (TFDVSLQT). Residues 190–241 (EKPTVPKKETKSDVKKENETTQKDIPEKTMKEETSQEAVTKEKETQSDQKES) show a composition bias toward basic and acidic residues. The segment at 190 to 253 (EKPTVPKKET…EDEKSNEADQ (64 aa)) is disordered.

It localises to the secreted. The protein localises to the cell wall. In terms of biological role, required for biofilm formation. Required for the proper anchoring and polymerization of TasA amyloid fibers at the cell surface. Is also a minor component of TasA fibers. This is TasA anchoring/assembly protein from Bacillus subtilis (strain 168).